Here is a 164-residue protein sequence, read N- to C-terminus: UPF0114 protein Avin_40830 (164 aa).

The next 4 helical transmembrane spans lie at 15 to 35 (LLAP…LKFF), 53 to 73 (LILV…LVMV), 103 to 125 (GSLK…LRVF), and 136 to 156 (LLWY…MSYL).

Belongs to the UPF0114 family.

The protein localises to the cell membrane. This Azotobacter vinelandii (strain DJ / ATCC BAA-1303) protein is UPF0114 protein Avin_40830.